The chain runs to 395 residues: Phosphoglycerate kinase (395 aa).

Substrate contacts are provided by residues 20-22 (DLN), Arg35, 58-61 (HFGR), Arg117, and Arg150. Residues Lys200, Glu322, and 352–355 (GGDT) contribute to the ATP site.

The protein belongs to the phosphoglycerate kinase family. In terms of assembly, monomer.

It is found in the cytoplasm. The catalysed reaction is (2R)-3-phosphoglycerate + ATP = (2R)-3-phospho-glyceroyl phosphate + ADP. It functions in the pathway carbohydrate degradation; glycolysis; pyruvate from D-glyceraldehyde 3-phosphate: step 2/5. The protein is Phosphoglycerate kinase of Brucella suis biovar 1 (strain 1330).